The sequence spans 1465 residues: DNA polymerase III PolC-type (1465 aa).

The Exonuclease domain maps to 427–583; the sequence is YVVFDVETTG…YDAEATGRLL (157 aa).

The protein belongs to the DNA polymerase type-C family. PolC subfamily.

The protein resides in the cytoplasm. It carries out the reaction DNA(n) + a 2'-deoxyribonucleoside 5'-triphosphate = DNA(n+1) + diphosphate. Its function is as follows. Required for replicative DNA synthesis. This DNA polymerase also exhibits 3' to 5' exonuclease activity. This chain is DNA polymerase III PolC-type, found in Streptococcus pyogenes serotype M2 (strain MGAS10270).